The chain runs to 326 residues: MAFKIIETASALPANIVTNDDLTAIMETSNEWIESRTGILERRISETENTSDLCLRVAQTLLDKSGIAVSQIKAIIVATMTPDYYTPSTAAIVQGRLGADQAFAFDISAACSGFTYALSAARGYVQTPDDYVLVIGGEVISKMLDWSDRSTAVLFGDGAAGVLLQGTTSDQESWVSEKLITIGTESDQLVSGYAPVKRPNFGQVGQTQVGIDFFKMTGKAIYQFSTRRVPKAIEAAVLEAGLTLDQIDHFLVHQANSRLITKMASMLDQPLTKFPMNLQHYGNTSAASIPLLLAEQVETNQIKRGDLCVLCGFGGGLTIGIQIIRY.

Active-site residues include Cys-111 and His-253. The ACP-binding stretch occupies residues 254-258 (QANSR). Asn-283 is an active-site residue.

Belongs to the thiolase-like superfamily. FabH family. In terms of assembly, homodimer.

The protein localises to the cytoplasm. It catalyses the reaction malonyl-[ACP] + acetyl-CoA + H(+) = 3-oxobutanoyl-[ACP] + CO2 + CoA. It participates in lipid metabolism; fatty acid biosynthesis. Functionally, catalyzes the condensation reaction of fatty acid synthesis by the addition to an acyl acceptor of two carbons from malonyl-ACP. Catalyzes the first condensation reaction which initiates fatty acid synthesis and may therefore play a role in governing the total rate of fatty acid production. Possesses both acetoacetyl-ACP synthase and acetyl transacylase activities. Its substrate specificity determines the biosynthesis of branched-chain and/or straight-chain of fatty acids. In Latilactobacillus sakei subsp. sakei (strain 23K) (Lactobacillus sakei subsp. sakei), this protein is Beta-ketoacyl-[acyl-carrier-protein] synthase III.